The chain runs to 268 residues: Tryptophan synthase alpha chain (268 aa).

Catalysis depends on proton acceptor residues E47 and D58.

It belongs to the TrpA family. Tetramer of two alpha and two beta chains.

It carries out the reaction (1S,2R)-1-C-(indol-3-yl)glycerol 3-phosphate + L-serine = D-glyceraldehyde 3-phosphate + L-tryptophan + H2O. Its pathway is amino-acid biosynthesis; L-tryptophan biosynthesis; L-tryptophan from chorismate: step 5/5. In terms of biological role, the alpha subunit is responsible for the aldol cleavage of indoleglycerol phosphate to indole and glyceraldehyde 3-phosphate. The sequence is that of Tryptophan synthase alpha chain from Chlorobium phaeobacteroides (strain BS1).